A 91-amino-acid chain; its full sequence is MRNYELTTITRVSSREVTKSEVQDTLNKFSVSVTADEDWGQRKLWHPIKHEEQGIFHHYKCSAEPSAIEKVEKEFLINQNILRSMVVRLDG.

Belongs to the bacterial ribosomal protein bS6 family.

In terms of biological role, binds together with bS18 to 16S ribosomal RNA. The polypeptide is Small ribosomal subunit protein bS6 (Leptospira borgpetersenii serovar Hardjo-bovis (strain JB197)).